Reading from the N-terminus, the 208-residue chain is Small ribosomal subunit protein uS4 (208 aa).

The region spanning 98 to 159 (RRLDNVAYRL…KSRKVAAISE (62 aa)) is the S4 RNA-binding domain.

Belongs to the universal ribosomal protein uS4 family. Part of the 30S ribosomal subunit. Contacts protein S5. The interaction surface between S4 and S5 is involved in control of translational fidelity.

Functionally, one of the primary rRNA binding proteins, it binds directly to 16S rRNA where it nucleates assembly of the body of the 30S subunit. In terms of biological role, with S5 and S12 plays an important role in translational accuracy. The chain is Small ribosomal subunit protein uS4 from Citrifermentans bemidjiense (strain ATCC BAA-1014 / DSM 16622 / JCM 12645 / Bem) (Geobacter bemidjiensis).